The sequence spans 282 residues: Sulfur carrier protein FdhD (282 aa).

The active-site Cysteine persulfide intermediate is the cysteine 115.

Belongs to the FdhD family.

It localises to the cytoplasm. Its function is as follows. Required for formate dehydrogenase (FDH) activity. Acts as a sulfur carrier protein that transfers sulfur from IscS to the molybdenum cofactor prior to its insertion into FDH. This is Sulfur carrier protein FdhD from Streptomyces avermitilis (strain ATCC 31267 / DSM 46492 / JCM 5070 / NBRC 14893 / NCIMB 12804 / NRRL 8165 / MA-4680).